The primary structure comprises 337 residues: tRNA N6-adenosine threonylcarbamoyltransferase (337 aa).

Residues His114 and His118 each coordinate Fe cation. Residues 136-140 (LVSGG), Asp169, Gly182, Asp186, and Asn275 each bind substrate. Asp301 is a binding site for Fe cation.

This sequence belongs to the KAE1 / TsaD family. Requires Fe(2+) as cofactor.

The protein resides in the cytoplasm. The catalysed reaction is L-threonylcarbamoyladenylate + adenosine(37) in tRNA = N(6)-L-threonylcarbamoyladenosine(37) in tRNA + AMP + H(+). In terms of biological role, required for the formation of a threonylcarbamoyl group on adenosine at position 37 (t(6)A37) in tRNAs that read codons beginning with adenine. Is involved in the transfer of the threonylcarbamoyl moiety of threonylcarbamoyl-AMP (TC-AMP) to the N6 group of A37, together with TsaE and TsaB. TsaD likely plays a direct catalytic role in this reaction. This chain is tRNA N6-adenosine threonylcarbamoyltransferase, found in Streptococcus uberis (strain ATCC BAA-854 / 0140J).